The sequence spans 320 residues: PUP1 protein homolog (320 aa).

2 consecutive transmembrane segments (helical) span residues 66-85 and 100-119; these read MWGGWLGFSAVFLTPFAYRY and FVLGVMALFFATNFAGRSMY. Residues 205–320 are disordered; sequence GGVFNGSPFM…QSGRYGGNRS (116 aa). S230 is modified (phosphoserine). Residues 253–266 show a composition bias toward polar residues; sequence GDNSSSSSWENIRN. Over residues 267–284 the composition is skewed to basic and acidic residues; sequence TSRDQSQESDASVDHESD.

Belongs to the PUP1 family.

It localises to the mitochondrion membrane. This is PUP1 protein homolog from Saccharomyces cerevisiae (strain ATCC 204508 / S288c) (Baker's yeast).